Reading from the N-terminus, the 421-residue chain is 5-methylthioadenosine/S-adenosylhomocysteine deaminase (421 aa).

Zn(2+)-binding residues include His-60 and His-62. Residues Glu-89 and His-181 each contribute to the substrate site. His-208 lines the Zn(2+) pocket. Substrate is bound by residues Glu-211 and Asp-296. Asp-296 serves as a coordination point for Zn(2+).

This sequence belongs to the metallo-dependent hydrolases superfamily. MTA/SAH deaminase family. It depends on Zn(2+) as a cofactor.

It catalyses the reaction S-adenosyl-L-homocysteine + H2O + H(+) = S-inosyl-L-homocysteine + NH4(+). The catalysed reaction is S-methyl-5'-thioadenosine + H2O + H(+) = S-methyl-5'-thioinosine + NH4(+). Functionally, catalyzes the deamination of 5-methylthioadenosine and S-adenosyl-L-homocysteine into 5-methylthioinosine and S-inosyl-L-homocysteine, respectively. Is also able to deaminate adenosine. This Pyrococcus horikoshii (strain ATCC 700860 / DSM 12428 / JCM 9974 / NBRC 100139 / OT-3) protein is 5-methylthioadenosine/S-adenosylhomocysteine deaminase.